A 274-amino-acid polypeptide reads, in one-letter code: NAD-dependent protein deacetylase (274 aa).

Residues 1-274 enclose the Deacetylase sirtuin-type domain; the sequence is MDSRMSDLQA…CDEVLAEVVP (274 aa). Residues 26–46 and 104–107 contribute to the NAD(+) site; these read GAGCSTASGIPDYRDGQGQWK and QNVD. Catalysis depends on H122, which acts as the Proton acceptor. C130, C133, C181, and C184 together coordinate Zn(2+). NAD(+)-binding positions include 221-223, 247-249, and C265; these read GSS and NLG.

It belongs to the sirtuin family. Class II subfamily. Requires Zn(2+) as cofactor.

The protein localises to the cytoplasm. The catalysed reaction is N(6)-acetyl-L-lysyl-[protein] + NAD(+) + H2O = 2''-O-acetyl-ADP-D-ribose + nicotinamide + L-lysyl-[protein]. Its function is as follows. NAD-dependent protein deacetylase which modulates the activities of several enzymes which are inactive in their acetylated form. The sequence is that of NAD-dependent protein deacetylase from Bordetella pertussis (strain Tohama I / ATCC BAA-589 / NCTC 13251).